The primary structure comprises 277 residues: Phosphatidylglycerol--prolipoprotein diacylglyceryl transferase (277 aa).

The next 7 helical transmembrane spans lie at 21 to 41, 60 to 80, 95 to 115, 124 to 144, 176 to 196, 203 to 223, and 239 to 259; these read LAVR…LWLA, LLFA…VLFY, VWTG…AMLW, FFTI…AGRL, SQLY…NWFI, GTVS…VEYV, and MGQI…LWAF. Arg-143 serves as a coordination point for a 1,2-diacyl-sn-glycero-3-phospho-(1'-sn-glycerol).

Belongs to the Lgt family.

The protein resides in the cell inner membrane. It catalyses the reaction L-cysteinyl-[prolipoprotein] + a 1,2-diacyl-sn-glycero-3-phospho-(1'-sn-glycerol) = an S-1,2-diacyl-sn-glyceryl-L-cysteinyl-[prolipoprotein] + sn-glycerol 1-phosphate + H(+). It functions in the pathway protein modification; lipoprotein biosynthesis (diacylglyceryl transfer). Its function is as follows. Catalyzes the transfer of the diacylglyceryl group from phosphatidylglycerol to the sulfhydryl group of the N-terminal cysteine of a prolipoprotein, the first step in the formation of mature lipoproteins. The protein is Phosphatidylglycerol--prolipoprotein diacylglyceryl transferase of Aliivibrio fischeri (strain ATCC 700601 / ES114) (Vibrio fischeri).